The following is a 226-amino-acid chain: Deoxyribose-phosphate aldolase (226 aa).

Asp95 serves as the catalytic Proton donor/acceptor. The active-site Schiff-base intermediate with acetaldehyde is the Lys157. Lys186 serves as the catalytic Proton donor/acceptor.

This sequence belongs to the DeoC/FbaB aldolase family. DeoC type 1 subfamily.

Its subcellular location is the cytoplasm. The enzyme catalyses 2-deoxy-D-ribose 5-phosphate = D-glyceraldehyde 3-phosphate + acetaldehyde. Its pathway is carbohydrate degradation; 2-deoxy-D-ribose 1-phosphate degradation; D-glyceraldehyde 3-phosphate and acetaldehyde from 2-deoxy-alpha-D-ribose 1-phosphate: step 2/2. With respect to regulation, partially inhibited by acetaldehyde. After incubation for 2, 4 and 6 hours in 300 mM acetaldehyde at 25 degrees Celsius, retains approximately 61.32%, 42.33% and 34.73% of the initial 2-deoxy-D-ribose-5-phosphate (DR5P) cleavage activity, respectively. Catalyzes a reversible aldol reaction between acetaldehyde and D-glyceraldehyde 3-phosphate to generate 2-deoxy-D-ribose 5-phosphate. Its function is as follows. In vitro, DERA can catalyze the aldol condensation of chloroacetaldehyde (CHAD) and acetaldehyde (ACD), yielding (S)-4-chloro-3-hydroxybutanal ((S)-CHB), which can combine with another aldehyde to form (3R,5S)-6-chloro-2,4,6-trideoxyhexapyranose (CTeHP), a key intermediate for statin drugs. The protein is Deoxyribose-phosphate aldolase of Pseudomonas syringae pv. syringae (strain B728a).